A 178-amino-acid chain; its full sequence is Small ribosomal subunit protein uS5 (178 aa).

The 64-residue stretch at 15–78 (FEEKIIEIRR…ADAKKNVIEV (64 aa)) folds into the S5 DRBM domain.

It belongs to the universal ribosomal protein uS5 family. In terms of assembly, part of the 30S ribosomal subunit. Contacts proteins S4 and S8.

Its function is as follows. With S4 and S12 plays an important role in translational accuracy. Functionally, located at the back of the 30S subunit body where it stabilizes the conformation of the head with respect to the body. This is Small ribosomal subunit protein uS5 from Thermotoga neapolitana (strain ATCC 49049 / DSM 4359 / NBRC 107923 / NS-E).